A 258-amino-acid polypeptide reads, in one-letter code: MKQLYWYTCGEGDCDLVLLHGWGLNSGVWHCIIDRLAPHFRLHLVDLPGYGRSQDYGAMSLADMAERVAQQAPKQALWLGWSMGGLVASQIALSQPECVRGLITVSSSPCFTARDEWPGIKPEVLAGFQHQLSDDFHRTVERFLALQTLGTESSRQDARLLKSVVLQHQMPDVEVLTGGLEILRTADLRTALSGFTLPFMRVYGHLDSLVPRKVASLLDSAWPQTQSVVMQGAAHAPFISHPNDFAKLILNFAEENKK.

The AB hydrolase-1 domain occupies 16 to 242 (LVLLHGWGLN…AAHAPFISHP (227 aa)). Substrate contacts are provided by residues Trp22, 82–83 (SM), and 143–147 (FLALQ). Ser82 acts as the Nucleophile in catalysis. Residues Asp207 and His235 contribute to the active site. His235 contacts substrate.

This sequence belongs to the AB hydrolase superfamily. Carboxylesterase BioH family. Monomer.

Its subcellular location is the cytoplasm. It catalyses the reaction 6-carboxyhexanoyl-[ACP] methyl ester + H2O = 6-carboxyhexanoyl-[ACP] + methanol + H(+). It participates in cofactor biosynthesis; biotin biosynthesis. The physiological role of BioH is to remove the methyl group introduced by BioC when the pimeloyl moiety is complete. It allows to synthesize pimeloyl-ACP via the fatty acid synthetic pathway through the hydrolysis of the ester bonds of pimeloyl-ACP esters. This chain is Pimeloyl-[acyl-carrier protein] methyl ester esterase, found in Yersinia pseudotuberculosis serotype IB (strain PB1/+).